A 120-amino-acid polypeptide reads, in one-letter code: MIVATLTPLWPLLDAEERPAVVSEVARSVTRSIALAPFHIRFAVESVSIVIGLCTVLISAGAGGPLARTLRTDRFYRLLQRMPGPAGSVIRLYRSMTLLAFYDEAPVAEKLLAARPAQTS.

Residues 47–63 traverse the membrane as a helical segment; sequence VSIVIGLCTVLISAGAG.

It localises to the membrane. This is an uncharacterized protein from Sinorhizobium fredii (strain NBRC 101917 / NGR234).